Consider the following 1254-residue polypeptide: SUN domain-containing ossification factor (1254 aa).

The signal sequence occupies residues 1 to 29 (MKKHRRALALVSCLFLCSLVWLPSWRVCC). Disordered stretches follow at residues 58-88 (KKDE…HKLK), 118-270 (EESS…DIPT), and 282-304 (EKEK…KKVQ). The segment covering 130–145 (VENISSSSTSEITPIS) has biased composition (low complexity). The segment covering 165-175 (EQSETDCDVGE) has biased composition (acidic residues). Asparagine 202 and asparagine 236 each carry an N-linked (GlcNAc...) asparagine glycan. The segment covering 241–253 (LKNESSDYTKPGD) has biased composition (basic and acidic residues). Positions 284–453 (EKSQSMHASS…SLIRVFGTSM (170 aa)) constitute an SUN domain. Residues 288–297 (SMHASSNGGS) are compositionally biased toward polar residues. N-linked (GlcNAc...) asparagine glycosylation is present at asparagine 524. 3 disordered regions span residues 530 to 553 (NATA…PSPE), 583 to 605 (EEEE…EDES), and 759 to 788 (HIPS…SSIE). The segment covering 540–553 (PESTPVSTPVPSPE) has biased composition (low complexity). Residues 909 to 1009 (NQKESVFMRL…VAELKREVSD (101 aa)) are a coiled coil. N-linked (GlcNAc...) asparagine glycans are attached at residues asparagine 928 and asparagine 955. A helical membrane pass occupies residues 1011-1031 (QSYLVISLVLCVVLGLMLCMQ). Position 1081 is a phosphoserine (serine 1081). The segment at 1152-1172 (EVYHSSYKGPPSEGSSETSSQ) is disordered. Residues 1163-1172 (SEGSSETSSQ) show a composition bias toward low complexity.

O-glycosylated. O-mannosylated by POMT1 and POMT2 and elongated by POMGNT1. Post-translationally, N-glycosylated. Highly expressed in pancreas and testis and to a lower extent in prostate, ovary, heart, thymus, small intestine and spleen.

The protein resides in the rough endoplasmic reticulum membrane. Its function is as follows. Required for bone modeling during late embryogenesis. Regulates type I collagen synthesis in osteoblasts during their postnatal maturation. The polypeptide is SUN domain-containing ossification factor (SUCO) (Homo sapiens (Human)).